Consider the following 542-residue polypeptide: Chaperonin GroEL 5 (542 aa).

ATP contacts are provided by residues 30–33, K51, 87–91, G415, and D496; these read TLGP and DGTTT.

It belongs to the chaperonin (HSP60) family. Forms a cylinder of 14 subunits composed of two heptameric rings stacked back-to-back. Interacts with the co-chaperonin GroES.

It is found in the cytoplasm. It catalyses the reaction ATP + H2O + a folded polypeptide = ADP + phosphate + an unfolded polypeptide.. Its function is as follows. Together with its co-chaperonin GroES, plays an essential role in assisting protein folding. The GroEL-GroES system forms a nano-cage that allows encapsulation of the non-native substrate proteins and provides a physical environment optimized to promote and accelerate protein folding. The polypeptide is Chaperonin GroEL 5 (Rhizobium meliloti (strain 1021) (Ensifer meliloti)).